A 361-amino-acid chain; its full sequence is Protein Csal_2339 (361 aa).

The Proton acceptor role is filled by Ser-91. Substrate is bound by residues 92 to 93 and 259 to 260; these read GS and GT.

This sequence belongs to the proline racemase family.

The catalysed reaction is trans-4-hydroxy-L-proline = cis-4-hydroxy-D-proline. Functionally, in vitro, catalyzes the epimerization of trans-4-hydroxy-L-proline (t4LHyp) to cis-4-hydroxy-D-proline (c4DHyp), albeit with very low efficiency. The physiological substrate may be different. Displays neither proline racemase activity nor t3LHyp dehydratase activity. The polypeptide is Protein Csal_2339 (Chromohalobacter salexigens (strain ATCC BAA-138 / DSM 3043 / CIP 106854 / NCIMB 13768 / 1H11)).